The chain runs to 378 residues: Odorant receptor 45a (378 aa).

Topologically, residues 1 to 30 are cytoplasmic; the sequence is MDASYFAVQRRALEIVGFDPSTPQLSLKHP. The helical transmembrane segment at 31–51 threads the bilayer; sequence IWAGILILSLISHNWPMVVYA. Residues 52–129 are Extracellular-facing; the sequence is LQDLSDLTRL…RYVARSFRNA (78 aa). Residues 130–150 form a helical membrane-spanning segment; that stretch reads AYGVICASAIAPMLLGLWGYV. At 151-173 the chain is on the cytoplasmic side; it reads ETGVFTPTTPMEFNFWLDERKPH. Residues 174–194 form a helical membrane-spanning segment; the sequence is FYWPIYVWGVLGVAAAAWLAI. The Extracellular portion of the chain corresponds to 195 to 197; sequence ATD. The chain crosses the membrane as a helical span at residues 198 to 218; it reads TLFSWLTHNVVIQFQLLELVL. At 219–249 the chain is on the cytoplasmic side; that stretch reads EEKDLNGGDSRLTGFVSRHRIALDLAKELSS. Residues 250–270 traverse the membrane as a helical segment; that stretch reads IFGEIVFVKYMLSYLQLCMLA. Topologically, residues 271–285 are extracellular; it reads FRFSRSGWSAQVPFR. The helical transmembrane segment at 286-306 threads the bilayer; sequence ATFLVAIIIQLSSYCYGGEYI. The Cytoplasmic portion of the chain corresponds to 307–342; the sequence is KQQSLAIAQAVYGQINWPEMTPKKRRLWQMVIMRAQ. A helical transmembrane segment spans residues 343–363; that stretch reads RPAKIFGFMFVVDLPLLLWVI. Residues 364–378 lie on the Extracellular side of the membrane; it reads RTAGSFLAMLRTFER.

This sequence belongs to the insect chemoreceptor superfamily. Heteromeric odorant receptor channel (TC 1.A.69) family. Or1a subfamily. Interacts with Orco. Complexes exist early in the endomembrane system in olfactory sensory neurons (OSNs), coupling these complexes to the conserved ciliary trafficking pathway.

Its subcellular location is the cell membrane. Odorant receptor which mediates acceptance or avoidance behavior, depending on its substrates. The odorant receptor repertoire encodes a large collection of odor stimuli that vary widely in identity, intensity, and duration. May form a complex with Orco to form odorant-sensing units, providing sensitive and prolonged odorant signaling and calcium permeability. Involved in the behavioral responses to hexanol, pentyl acetate, benzyl acetate, and 2-heptanone. The sequence is that of Odorant receptor 45a (Or45a) from Drosophila melanogaster (Fruit fly).